Consider the following 254-residue polypeptide: Aspartate/glutamate leucyltransferase (254 aa).

It belongs to the R-transferase family. Bpt subfamily.

It localises to the cytoplasm. The enzyme catalyses N-terminal L-glutamyl-[protein] + L-leucyl-tRNA(Leu) = N-terminal L-leucyl-L-glutamyl-[protein] + tRNA(Leu) + H(+). It catalyses the reaction N-terminal L-aspartyl-[protein] + L-leucyl-tRNA(Leu) = N-terminal L-leucyl-L-aspartyl-[protein] + tRNA(Leu) + H(+). Its function is as follows. Functions in the N-end rule pathway of protein degradation where it conjugates Leu from its aminoacyl-tRNA to the N-termini of proteins containing an N-terminal aspartate or glutamate. In Mesorhizobium japonicum (strain LMG 29417 / CECT 9101 / MAFF 303099) (Mesorhizobium loti (strain MAFF 303099)), this protein is Aspartate/glutamate leucyltransferase.